Reading from the N-terminus, the 35-residue chain is Photosystem II reaction center protein T (35 aa).

A helical transmembrane segment spans residues 3–23 (ALVYTFLLIGTLGIIFFAIFF).

The protein belongs to the PsbT family. As to quaternary structure, PSII is composed of 1 copy each of membrane proteins PsbA, PsbB, PsbC, PsbD, PsbE, PsbF, PsbH, PsbI, PsbJ, PsbK, PsbL, PsbM, PsbT, PsbY, PsbZ, Psb30/Ycf12, at least 3 peripheral proteins of the oxygen-evolving complex and a large number of cofactors. It forms dimeric complexes.

It localises to the plastid. Its subcellular location is the chloroplast thylakoid membrane. Functionally, found at the monomer-monomer interface of the photosystem II (PS II) dimer, plays a role in assembly and dimerization of PSII. PSII is a light-driven water plastoquinone oxidoreductase, using light energy to abstract electrons from H(2)O, generating a proton gradient subsequently used for ATP formation. The polypeptide is Photosystem II reaction center protein T (Coleochaete orbicularis (Charophycean green alga)).